Consider the following 334-residue polypeptide: Holliday junction branch migration complex subunit RuvB (334 aa).

The interval 1 to 181 (MTRILDNDLM…FGITGHMEYY (181 aa)) is large ATPase domain (RuvB-L). ATP-binding positions include Leu-20, Arg-21, Gly-62, Lys-65, Thr-66, Thr-67, 128-130 (EDF), Arg-171, Tyr-181, and Arg-218. Position 66 (Thr-66) interacts with Mg(2+). Residues 182–252 (QVDDLTEIVE…MTDKALEMLD (71 aa)) are small ATPAse domain (RuvB-S). The tract at residues 255-334 (HEGLDYVDQK…LKYPLDTKTE (80 aa)) is head domain (RuvB-H). Residues Arg-291, Arg-310, Arg-312, and Arg-315 each contribute to the DNA site.

It belongs to the RuvB family. As to quaternary structure, homohexamer. Forms an RuvA(8)-RuvB(12)-Holliday junction (HJ) complex. HJ DNA is sandwiched between 2 RuvA tetramers; dsDNA enters through RuvA and exits via RuvB. An RuvB hexamer assembles on each DNA strand where it exits the tetramer. Each RuvB hexamer is contacted by two RuvA subunits (via domain III) on 2 adjacent RuvB subunits; this complex drives branch migration. In the full resolvosome a probable DNA-RuvA(4)-RuvB(12)-RuvC(2) complex forms which resolves the HJ.

It is found in the cytoplasm. The enzyme catalyses ATP + H2O = ADP + phosphate + H(+). The RuvA-RuvB-RuvC complex processes Holliday junction (HJ) DNA during genetic recombination and DNA repair, while the RuvA-RuvB complex plays an important role in the rescue of blocked DNA replication forks via replication fork reversal (RFR). RuvA specifically binds to HJ cruciform DNA, conferring on it an open structure. The RuvB hexamer acts as an ATP-dependent pump, pulling dsDNA into and through the RuvAB complex. RuvB forms 2 homohexamers on either side of HJ DNA bound by 1 or 2 RuvA tetramers; 4 subunits per hexamer contact DNA at a time. Coordinated motions by a converter formed by DNA-disengaged RuvB subunits stimulates ATP hydrolysis and nucleotide exchange. Immobilization of the converter enables RuvB to convert the ATP-contained energy into a lever motion, pulling 2 nucleotides of DNA out of the RuvA tetramer per ATP hydrolyzed, thus driving DNA branch migration. The RuvB motors rotate together with the DNA substrate, which together with the progressing nucleotide cycle form the mechanistic basis for DNA recombination by continuous HJ branch migration. Branch migration allows RuvC to scan DNA until it finds its consensus sequence, where it cleaves and resolves cruciform DNA. This Streptococcus uberis (strain ATCC BAA-854 / 0140J) protein is Holliday junction branch migration complex subunit RuvB.